The following is a 931-amino-acid chain: Protocadherin gamma-B2 (931 aa).

A signal peptide spans 1 to 30 (MKASSGRCGLVRWLQVLLPFLLSLFPGALP). Cadherin domains follow at residues 31-133 (VQIR…TPLF), 134-242 (KQTK…PPVF), 243-347 (SQDV…APEV), 348-452 (IVTS…APVF), 453-562 (QQTS…APRV), and 570-675 (DGSA…LPDL). Over 31–691 (VQIRYSIPEE…SDPQAELQFY (661 aa)) the chain is Extracellular. Asparagine 419 and asparagine 545 each carry an N-linked (GlcNAc...) asparagine glycan. Residues 692-712 (LVVALALISVLFFLAVILAIS) form a helical membrane-spanning segment. Residues 713-931 (LRLRRSSRSD…KKKSGKKEKK (219 aa)) are Cytoplasmic-facing. Disordered regions lie at residues 814–840 (DWRFSQAQRPGTSGSQNGDDTGTWPNN) and 901–931 (ATLTNAAGKRDGKAPAGGNGNKKKSGKKEKK). Residues 815 to 840 (WRFSQAQRPGTSGSQNGDDTGTWPNN) are compositionally biased toward polar residues. The segment covering 921–931 (NKKKSGKKEKK) has biased composition (basic residues).

The protein localises to the cell membrane. Functionally, potential calcium-dependent cell-adhesion protein. May be involved in the establishment and maintenance of specific neuronal connections in the brain. The polypeptide is Protocadherin gamma-B2 (PCDHGB2) (Pan troglodytes (Chimpanzee)).